The following is a 292-amino-acid chain: Small ribosomal subunit biogenesis GTPase RsgA (292 aa).

In terms of domain architecture, CP-type G spans 64 to 221 (RSELFRPAVA…LVDTPGFSSL (158 aa)). GTP is bound by residues 113-116 (NKMD) and 164-172 (GPSGVGKST). 4 residues coordinate Zn(2+): C245, C250, H252, and C258.

Belongs to the TRAFAC class YlqF/YawG GTPase family. RsgA subfamily. As to quaternary structure, monomer. Associates with 30S ribosomal subunit, binds 16S rRNA. Zn(2+) is required as a cofactor.

It localises to the cytoplasm. One of several proteins that assist in the late maturation steps of the functional core of the 30S ribosomal subunit. Helps release RbfA from mature subunits. May play a role in the assembly of ribosomal proteins into the subunit. Circularly permuted GTPase that catalyzes slow GTP hydrolysis, GTPase activity is stimulated by the 30S ribosomal subunit. The chain is Small ribosomal subunit biogenesis GTPase RsgA from Clostridium botulinum (strain ATCC 19397 / Type A).